Consider the following 844-residue polypeptide: Eukaryotic translation elongation factor 2 (844 aa).

Residues 17 to 348 (RNIRNMSVIA…MIAIHLPSPV (332 aa)) form the tr-type G domain. Residue 26–33 (AHVDHGKS) coordinates GTP. Residues threonine 57 and threonine 59 each carry the phosphothreonine modification. GTP is bound by residues 162 to 165 (NKMD) and 219 to 221 (SGL). Histidine 701 carries the post-translational modification Diphthamide.

Belongs to the TRAFAC class translation factor GTPase superfamily. Classic translation factor GTPase family. EF-G/EF-2 subfamily. Post-translationally, phosphorylation by EF-2 kinase completely inactivates eEF2.

The protein localises to the cytoplasm. The enzyme catalyses GTP + H2O = GDP + phosphate + H(+). Its function is as follows. Catalyzes the GTP-dependent ribosomal translocation step during translation elongation. During this step, the ribosome changes from the pre-translocational (PRE) to the post-translocational (POST) state as the newly formed A-site-bound peptidyl-tRNA and P-site-bound deacylated tRNA move to the P and E sites, respectively. Catalyzes the coordinated movement of the two tRNA molecules, the mRNA and conformational changes in the ribosome. This is Eukaryotic translation elongation factor 2 from Drosophila melanogaster (Fruit fly).